The following is a 726-amino-acid chain: Catalase-peroxidase (726 aa).

A disordered region spans residues 1–33; sequence MSTTDDTHNTLSTGKCPFHQGGHDRSAGAGTAS. Residues 105–226 constitute a cross-link (tryptophyl-tyrosyl-methioninium (Trp-Tyr) (with M-252)); sequence WHGAGTYRSI…LGATEMGLIY (122 aa). His106 functions as the Proton acceptor in the catalytic mechanism. The tryptophyl-tyrosyl-methioninium (Tyr-Met) (with W-105) cross-link spans 226 to 252; sequence YVNPEGPDHSGEPLSAAAAIRATFGNM. His267 contacts heme b.

Belongs to the peroxidase family. Peroxidase/catalase subfamily. In terms of assembly, homodimer or homotetramer. Heme b serves as cofactor. Post-translationally, formation of the three residue Trp-Tyr-Met cross-link is important for the catalase, but not the peroxidase activity of the enzyme.

It carries out the reaction H2O2 + AH2 = A + 2 H2O. It catalyses the reaction 2 H2O2 = O2 + 2 H2O. Its function is as follows. Bifunctional enzyme with both catalase and broad-spectrum peroxidase activity. In Salmonella heidelberg (strain SL476), this protein is Catalase-peroxidase.